The primary structure comprises 449 residues: MGKYFGTDGVRGEANVELTPELAFKLGRFGGYVLSQHEPDRPRVFVARDTRISGELLESALVAGLLSVGIEVYKLGVLATPGVSYLVRTEQASAGVMISASHNPALDNGIKFFGGDGFKLADEQEAEIEALLDAKEDDLPRPSAQGLGMVVDYPEGLRKYEKFLVSTGSDLEGMKIAIDAANGAASYSARQVFLDLNADITVIGEEPDGLNINDGVGSTHPEQLQNLVKGSDFVIGLAFDGDSDRLIAVDENGEIVDGDKIMYIIGKYLSEKGRLSKNTIVTTVMSNLGFHKALDRENINKKITAVGDRYVVEEMRRSGYNLGGEQSGHVIIMDYNTTGDGQLTAIQLTKVMKETGKTLSELANEVTIYPQKLVNIYVKNDMKNKAMEVPMIAQIIEKMEAEMAGNGRILVRPSGTEPLLRVMAEAPSTEEVNYYVDTIAKVVKTEIGI.

The active-site Phosphoserine intermediate is the Ser101. Mg(2+) is bound by residues Ser101, Asp240, Asp242, and Asp244. Position 101 is a phosphoserine (Ser101).

The protein belongs to the phosphohexose mutase family. Mg(2+) is required as a cofactor. In terms of processing, activated by phosphorylation.

The catalysed reaction is alpha-D-glucosamine 1-phosphate = D-glucosamine 6-phosphate. Functionally, catalyzes the conversion of glucosamine-6-phosphate to glucosamine-1-phosphate. In Streptococcus mutans serotype c (strain ATCC 700610 / UA159), this protein is Phosphoglucosamine mutase.